Here is a 392-residue protein sequence, read N- to C-terminus: FK506-binding protein 4 (392 aa).

2 disordered regions span residues 58-116 (NPEL…NEID) and 161-284 (GNYV…PKTK). Composition is skewed to acidic residues over residues 73–86 (DGLE…EQEA), 104–116 (SESE…NEID), and 172–219 (SDSD…DASD). Phosphoserine is present on residues S80 and S82. Basic and acidic residues-rich tracts occupy residues 220-234 (IESR…DEKK) and 252-279 (SAKP…ESKP). The PPIase FKBP-type domain occupies 306–392 (GTRVGMRYVG…TFDVKLVSMK (87 aa)).

It belongs to the FKBP-type PPIase family. FKBP3/4 subfamily. In terms of assembly, binds to histones H3 and H4. Interacts with NOP53.

It localises to the nucleus. It catalyses the reaction [protein]-peptidylproline (omega=180) = [protein]-peptidylproline (omega=0). Its function is as follows. PPIase that acts as a histone chaperone. Histone proline isomerase that increases the rate of cis-trans isomerization at 'Pro-17' (H3P16), 'Pro-31' (H3P30) and 'Pro-39 (H3P38) on the histone H3 N-terminal tail. H3P16 and H3P30 are the major proline targets with little activity shown against H3P38. H3P38 isomerization influences SET2-mediated H3K36 methylation thereby regulating gene expression. The sequence is that of FK506-binding protein 4 from Saccharomyces cerevisiae (strain ATCC 204508 / S288c) (Baker's yeast).